Consider the following 695-residue polypeptide: Probable rhamnogalacturonate lyase C (695 aa).

Residues 1–21 form the signal peptide; sequence MFLPSRKALAFLACLASHSVA. Asparagine 28, asparagine 96, asparagine 118, asparagine 144, asparagine 199, asparagine 285, asparagine 532, and asparagine 638 each carry an N-linked (GlcNAc...) asparagine glycan.

This sequence belongs to the polysaccharide lyase 4 family.

It is found in the secreted. It carries out the reaction Endotype eliminative cleavage of L-alpha-rhamnopyranosyl-(1-&gt;4)-alpha-D-galactopyranosyluronic acid bonds of rhamnogalacturonan I domains in ramified hairy regions of pectin leaving L-rhamnopyranose at the reducing end and 4-deoxy-4,5-unsaturated D-galactopyranosyluronic acid at the non-reducing end.. Functionally, pectinolytic enzymes consist of four classes of enzymes: pectin lyase, polygalacturonase, pectin methylesterase and rhamnogalacturonase. Degrades the rhamnogalacturonan I (RG-I) backbone of pectin. This is Probable rhamnogalacturonate lyase C (rglC) from Aspergillus oryzae (strain ATCC 42149 / RIB 40) (Yellow koji mold).